A 155-amino-acid chain; its full sequence is Small ribosomal subunit protein uS7cz/uS7cy (155 aa).

This sequence belongs to the universal ribosomal protein uS7 family. Part of the 30S ribosomal subunit.

It is found in the plastid. One of the primary rRNA binding proteins, it binds directly to 16S rRNA where it nucleates assembly of the head domain of the 30S subunit. The polypeptide is Small ribosomal subunit protein uS7cz/uS7cy (rps7-A) (Cuscuta exaltata (Tall dodder)).